A 427-amino-acid polypeptide reads, in one-letter code: Diaminobutyrate--2-oxoglutarate transaminase (427 aa).

Lys264 is modified (N6-(pyridoxal phosphate)lysine).

The protein belongs to the class-III pyridoxal-phosphate-dependent aminotransferase family. It depends on pyridoxal 5'-phosphate as a cofactor.

It carries out the reaction L-2,4-diaminobutanoate + 2-oxoglutarate = L-aspartate 4-semialdehyde + L-glutamate. It participates in amine and polyamine biosynthesis; ectoine biosynthesis; L-ectoine from L-aspartate 4-semialdehyde: step 1/3. Functionally, catalyzes reversively the conversion of L-aspartate beta-semialdehyde (ASA) to L-2,4-diaminobutyrate (DABA) by transamination with L-glutamate. The sequence is that of Diaminobutyrate--2-oxoglutarate transaminase (ectB) from Wolinella succinogenes (strain ATCC 29543 / DSM 1740 / CCUG 13145 / JCM 31913 / LMG 7466 / NCTC 11488 / FDC 602W) (Vibrio succinogenes).